Here is a 452-residue protein sequence, read N- to C-terminus: Phosphoglucosamine mutase (452 aa).

The active-site Phosphoserine intermediate is the S108. Residues S108, D247, D249, and D251 each coordinate Mg(2+). S108 is subject to Phosphoserine.

Belongs to the phosphohexose mutase family. It depends on Mg(2+) as a cofactor. Activated by phosphorylation.

The enzyme catalyses alpha-D-glucosamine 1-phosphate = D-glucosamine 6-phosphate. Functionally, catalyzes the conversion of glucosamine-6-phosphate to glucosamine-1-phosphate. The polypeptide is Phosphoglucosamine mutase (Paraburkholderia phymatum (strain DSM 17167 / CIP 108236 / LMG 21445 / STM815) (Burkholderia phymatum)).